A 633-amino-acid polypeptide reads, in one-letter code: tRNA uridine 5-carboxymethylaminomethyl modification enzyme MnmG (633 aa).

Residues Gly13–Gly18, Val125, and Ser180 each bind FAD. Gly273–Phe287 is a binding site for NAD(+). An FAD-binding site is contributed by Gln370.

The protein belongs to the MnmG family. Homodimer. Heterotetramer of two MnmE and two MnmG subunits. Requires FAD as cofactor.

It localises to the cytoplasm. NAD-binding protein involved in the addition of a carboxymethylaminomethyl (cmnm) group at the wobble position (U34) of certain tRNAs, forming tRNA-cmnm(5)s(2)U34. The protein is tRNA uridine 5-carboxymethylaminomethyl modification enzyme MnmG of Alteromonas mediterranea (strain DSM 17117 / CIP 110805 / LMG 28347 / Deep ecotype).